The sequence spans 513 residues: ATP synthase subunit alpha (513 aa).

169–176 (GDRQTGKT) contributes to the ATP binding site.

Belongs to the ATPase alpha/beta chains family. F-type ATPases have 2 components, CF(1) - the catalytic core - and CF(0) - the membrane proton channel. CF(1) has five subunits: alpha(3), beta(3), gamma(1), delta(1), epsilon(1). CF(0) has three main subunits: a(1), b(2) and c(9-12). The alpha and beta chains form an alternating ring which encloses part of the gamma chain. CF(1) is attached to CF(0) by a central stalk formed by the gamma and epsilon chains, while a peripheral stalk is formed by the delta and b chains.

The protein localises to the cell inner membrane. It carries out the reaction ATP + H2O + 4 H(+)(in) = ADP + phosphate + 5 H(+)(out). Produces ATP from ADP in the presence of a proton gradient across the membrane. The alpha chain is a regulatory subunit. The polypeptide is ATP synthase subunit alpha (Actinobacillus pleuropneumoniae serotype 7 (strain AP76)).